Reading from the N-terminus, the 879-residue chain is Alanine--tRNA ligase (879 aa).

4 residues coordinate Zn(2+): H566, H570, C668, and H672.

This sequence belongs to the class-II aminoacyl-tRNA synthetase family. Zn(2+) serves as cofactor.

It is found in the cytoplasm. The enzyme catalyses tRNA(Ala) + L-alanine + ATP = L-alanyl-tRNA(Ala) + AMP + diphosphate. Functionally, catalyzes the attachment of alanine to tRNA(Ala) in a two-step reaction: alanine is first activated by ATP to form Ala-AMP and then transferred to the acceptor end of tRNA(Ala). Also edits incorrectly charged Ser-tRNA(Ala) and Gly-tRNA(Ala) via its editing domain. This is Alanine--tRNA ligase from Listeria monocytogenes serovar 1/2a (strain ATCC BAA-679 / EGD-e).